Consider the following 360-residue polypeptide: Glutamate 5-kinase (360 aa).

Lys-7 serves as a coordination point for ATP. Substrate is bound by residues Ser-47, Asp-134, and Asn-146. Residues Thr-166–Asp-167 and Thr-210–Lys-216 contribute to the ATP site. The region spanning Val-275–Val-356 is the PUA domain.

It belongs to the glutamate 5-kinase family.

It localises to the cytoplasm. The enzyme catalyses L-glutamate + ATP = L-glutamyl 5-phosphate + ADP. The protein operates within amino-acid biosynthesis; L-proline biosynthesis; L-glutamate 5-semialdehyde from L-glutamate: step 1/2. In terms of biological role, catalyzes the transfer of a phosphate group to glutamate to form L-glutamate 5-phosphate. In Prochlorococcus marinus (strain MIT 9301), this protein is Glutamate 5-kinase.